A 122-amino-acid chain; its full sequence is MIQPQSYLNVADNSGARRLMCIRVLGSSNRKYANIGDMIIAVVKEAVPNMPLKKSEVVRAVIVRTCKGIKRNNGMILRFDDNAAVVVNQEGNPRGTRVFGPVARELRDFNFTKIVSLAPEVL.

This sequence belongs to the universal ribosomal protein uL14 family. As to quaternary structure, part of the 50S ribosomal subunit.

It is found in the plastid. Its subcellular location is the chloroplast. Functionally, binds to 23S rRNA. This chain is Large ribosomal subunit protein uL14c, found in Staurastrum punctulatum (Green alga).